We begin with the raw amino-acid sequence, 253 residues long: MQIRKVKISKVKDGYRASSEDFVAVEEPLQIFVNEKNLAIIMRTPGNDLELTLGFLYYEDYINSLRDVEEISMLSDNEIHVRLTNGKFVETRNFVINSSCGICGRGFLNAIELLKSDAKTSNEVIISLPEKLRSNQGVFNITGGLHAAALFTLSGELISIYEDVGRHNAVDKIIGSLIHKRRLPFTEGILQVSGRIGYEIVSKAIKAGIPIISGISAPTSKAIEIAEDAGATLVGFVRGNSFNVYTHPERIDL.

Cys100 functions as the Cysteine persulfide intermediate in the catalytic mechanism.

This sequence belongs to the FdhD family.

The protein localises to the cytoplasm. Its function is as follows. Required for formate dehydrogenase (FDH) activity. Acts as a sulfur carrier protein that transfers sulfur from IscS to the molybdenum cofactor prior to its insertion into FDH. This Sulfolobus acidocaldarius (strain ATCC 33909 / DSM 639 / JCM 8929 / NBRC 15157 / NCIMB 11770) protein is Sulfur carrier protein FdhD.